A 171-amino-acid polypeptide reads, in one-letter code: Ly6/PLAUR domain-containing protein 6 (171 aa).

A signal peptide spans 1-25; the sequence is MEPSPALAWLLLLSLVADCLKAAQS. Positions 47-141 constitute a UPAR/Ly6 domain; it reads FKCFTCEKAA…PRNDTDATFA (95 aa). Intrachain disulfides connect cysteine 49–cysteine 77, cysteine 52–cysteine 61, cysteine 70–cysteine 96, cysteine 102–cysteine 121, cysteine 107–cysteine 118, and cysteine 122–cysteine 127. A NxI motif motif is present at residues 88–90; it reads NSI. N-linked (GlcNAc...) asparagine glycosylation is found at asparagine 134 and asparagine 147. Asparagine 147 carries GPI-anchor amidated asparagine lipidation. The propeptide at 148 to 171 is removed in mature form; that stretch reads QTNGHPHCVSVIVSCLWVWLGLTL.

In terms of assembly, interacts with nicotinic acetylcholine receptors (nAChRs) including CHRNA3, CHRNA4, CHRNA5, CHRNA6, CHRNA7, CHRNB2 and CHRNB4. Interacts (via NxI motif) with LRP6. In terms of tissue distribution, expressed at high levels in the cortex and cerebellum of the brain, at moderate levels in the lung, kidney, and liver, and at low levels in the heart and prostate (at protein level). Expressed in neurons (at protein level).

The protein resides in the secreted. It localises to the cytoplasm. The protein localises to the cell membrane. It is found in the synapse. Its subcellular location is the synaptosome. The protein resides in the membrane raft. It localises to the cell projection. The protein localises to the dendrite. It is found in the perikaryon. In terms of biological role, acts as a modulator of nicotinic acetylcholine receptors (nAChRs) function in the brain. Inhibits nicotine-induced Ca(2+) influx through nAChRs. In vitro, specifically inhibits alpha-3:beta-4 and alpha-7 nAChR currents in an allosteric manner. Acts as a positive regulator of Wnt/beta-catenin signaling. The polypeptide is Ly6/PLAUR domain-containing protein 6 (Lypd6) (Rattus norvegicus (Rat)).